The chain runs to 84 residues: MSDKIRTQLGRVVSDKMDKSIVVAIERMVKHPIYGKFVKRTTKVHAHDENNECGIGDTVEIRECRPLSKTKSWTLVKIVEKAKM.

The protein belongs to the universal ribosomal protein uS17 family. As to quaternary structure, part of the 30S ribosomal subunit.

One of the primary rRNA binding proteins, it binds specifically to the 5'-end of 16S ribosomal RNA. The chain is Small ribosomal subunit protein uS17 from Vibrio cholerae serotype O1 (strain ATCC 39541 / Classical Ogawa 395 / O395).